The sequence spans 31 residues: Cyclotide mden-L (31 aa).

Positions 1-31 (GSIPCGESCVYIPCISAVLGCSCKNKVCYRN) form a cross-link, cyclopeptide (Gly-Asn). 3 disulfide bridges follow: Cys5–Cys21, Cys9–Cys23, and Cys14–Cys28.

The protein belongs to the cyclotide family. Bracelet subfamily. In terms of processing, this is a cyclic peptide.

Its function is as follows. Probably participates in a plant defense mechanism. The protein is Cyclotide mden-L of Melicytus dentatus (Tree violet).